We begin with the raw amino-acid sequence, 37 residues long: MKVNPSVKPICDKCRVIRRHGRVMVICSDPRHKQRQG.

Belongs to the bacterial ribosomal protein bL36 family.

The protein is Large ribosomal subunit protein bL36 of Mycobacterium ulcerans (strain Agy99).